The following is a 270-amino-acid chain: Glutamate 5-kinase (270 aa).

Residue K17 coordinates ATP. Substrate is bound by residues S57, D144, and N160. ATP contacts are provided by residues 180–181 (SD) and 222–228 (TGGMTSK).

The protein belongs to the glutamate 5-kinase family.

It is found in the cytoplasm. It carries out the reaction L-glutamate + ATP = L-glutamyl 5-phosphate + ADP. It participates in amino-acid biosynthesis; L-proline biosynthesis; L-glutamate 5-semialdehyde from L-glutamate: step 1/2. Functionally, catalyzes the transfer of a phosphate group to glutamate to form L-glutamate 5-phosphate. The polypeptide is Glutamate 5-kinase (Lactococcus lactis subsp. lactis (strain IL1403) (Streptococcus lactis)).